A 572-amino-acid polypeptide reads, in one-letter code: Proline--tRNA ligase (572 aa).

Belongs to the class-II aminoacyl-tRNA synthetase family. ProS type 1 subfamily. Homodimer.

It localises to the cytoplasm. It carries out the reaction tRNA(Pro) + L-proline + ATP = L-prolyl-tRNA(Pro) + AMP + diphosphate. Catalyzes the attachment of proline to tRNA(Pro) in a two-step reaction: proline is first activated by ATP to form Pro-AMP and then transferred to the acceptor end of tRNA(Pro). As ProRS can inadvertently accommodate and process non-cognate amino acids such as alanine and cysteine, to avoid such errors it has two additional distinct editing activities against alanine. One activity is designated as 'pretransfer' editing and involves the tRNA(Pro)-independent hydrolysis of activated Ala-AMP. The other activity is designated 'posttransfer' editing and involves deacylation of mischarged Ala-tRNA(Pro). The misacylated Cys-tRNA(Pro) is not edited by ProRS. The polypeptide is Proline--tRNA ligase (Salmonella choleraesuis (strain SC-B67)).